A 176-amino-acid polypeptide reads, in one-letter code: Adenine phosphoribosyltransferase (176 aa).

It belongs to the purine/pyrimidine phosphoribosyltransferase family. As to quaternary structure, homodimer.

Its subcellular location is the cytoplasm. The enzyme catalyses AMP + diphosphate = 5-phospho-alpha-D-ribose 1-diphosphate + adenine. Its pathway is purine metabolism; AMP biosynthesis via salvage pathway; AMP from adenine: step 1/1. Its function is as follows. Catalyzes a salvage reaction resulting in the formation of AMP, that is energically less costly than de novo synthesis. This Leuconostoc mesenteroides subsp. mesenteroides (strain ATCC 8293 / DSM 20343 / BCRC 11652 / CCM 1803 / JCM 6124 / NCDO 523 / NBRC 100496 / NCIMB 8023 / NCTC 12954 / NRRL B-1118 / 37Y) protein is Adenine phosphoribosyltransferase.